A 336-amino-acid chain; its full sequence is WAT1-related protein At2g37450 (336 aa).

The next 9 helical transmembrane spans lie at alanine 7 to threonine 27, histidine 45 to alanine 65, threonine 79 to phenylalanine 99, valine 115 to alanine 135, glycine 160 to isoleucine 180, leucine 189 to valine 209, leucine 227 to valine 247, phenylalanine 255 to phenylalanine 275, and methionine 279 to tryptophan 299. EamA domains follow at residues valine 63–methionine 126 and phenylalanine 169–isoleucine 298.

This sequence belongs to the drug/metabolite transporter (DMT) superfamily. Plant drug/metabolite exporter (P-DME) (TC 2.A.7.4) family.

The protein resides in the membrane. The polypeptide is WAT1-related protein At2g37450 (Arabidopsis thaliana (Mouse-ear cress)).